We begin with the raw amino-acid sequence, 900 residues long: Protein translocase subunit SecA (900 aa).

Residues Gln87, 105–109, and Asp510 each bind ATP; that span reads GEGKT. The tract at residues 857–890 is disordered; that stretch reads DSLDSLSDGGSDSADGQEYPKVGRNEPCPCGSGK. Positions 860–872 are enriched in low complexity; the sequence is DSLSDGGSDSADG. Cys884, Cys886, Cys895, and His896 together coordinate Zn(2+).

The protein belongs to the SecA family. As to quaternary structure, monomer and homodimer. Part of the essential Sec protein translocation apparatus which comprises SecA, SecYEG and auxiliary proteins SecDF-YajC and YidC. It depends on Zn(2+) as a cofactor.

Its subcellular location is the cell inner membrane. The protein localises to the cytoplasm. The enzyme catalyses ATP + H2O + cellular proteinSide 1 = ADP + phosphate + cellular proteinSide 2.. Part of the Sec protein translocase complex. Interacts with the SecYEG preprotein conducting channel. Has a central role in coupling the hydrolysis of ATP to the transfer of proteins into and across the cell membrane, serving both as a receptor for the preprotein-SecB complex and as an ATP-driven molecular motor driving the stepwise translocation of polypeptide chains across the membrane. This is Protein translocase subunit SecA from Marinomonas sp. (strain MWYL1).